Here is a 151-residue protein sequence, read N- to C-terminus: Histone H2A.2.2 (151 aa).

The residue at position 1 (Met-1) is an N-acetylmethionine. The tract at residues 129–151 is disordered; sequence EKAEKAGTKAKSPKKATKSPKKA. A compositionally biased stretch (basic residues) spans 139–151; it reads KSPKKATKSPKKA. 2 consecutive short sequence motifs (SPKK motif) follow at residues 140–143 and 147–150; these read SPKK.

It belongs to the histone H2A family. In terms of assembly, the nucleosome is a histone octamer containing two molecules each of H2A, H2B, H3 and H4 assembled in one H3-H4 heterotetramer and two H2A-H2B heterodimers. The octamer wraps approximately 147 bp of DNA. Post-translationally, phosphorylated within its C-terminal part, probably at the SPKK motifs.

It is found in the nucleus. The protein resides in the chromosome. In terms of biological role, core component of nucleosome. Nucleosomes wrap and compact DNA into chromatin, limiting DNA accessibility to the cellular machineries which require DNA as a template. Histones thereby play a central role in transcription regulation, DNA repair, DNA replication and chromosomal stability. DNA accessibility is regulated via a complex set of post-translational modifications of histones, also called histone code, and nucleosome remodeling. The chain is Histone H2A.2.2 from Triticum aestivum (Wheat).